The chain runs to 427 residues: Trigger factor (427 aa).

One can recognise a PPIase FKBP-type domain in the interval 163–248; it reads GNIAIIDFKG…VKGIKAKELP (86 aa).

This sequence belongs to the FKBP-type PPIase family. Tig subfamily.

The protein resides in the cytoplasm. It carries out the reaction [protein]-peptidylproline (omega=180) = [protein]-peptidylproline (omega=0). In terms of biological role, involved in protein export. Acts as a chaperone by maintaining the newly synthesized protein in an open conformation. Functions as a peptidyl-prolyl cis-trans isomerase. The sequence is that of Trigger factor from Clostridium botulinum (strain Eklund 17B / Type B).